The primary structure comprises 479 residues: Replication factor C large subunit (479 aa).

An ATP-binding site is contributed by 43–50 (GPPGVGKT). A disordered region spans residues 441–479 (EEKEESVEEVAEEKPEEEREEPRARKKAGKNLTLDSFFS). The segment covering 452-463 (EEKPEEEREEPR) has biased composition (basic and acidic residues).

Belongs to the activator 1 small subunits family. RfcL subfamily. In terms of assembly, heteropentamer composed of four small subunits (RfcS) and one large subunit (RfcL). Both subunits interact with PCNA.

Functionally, part of the RFC clamp loader complex which loads the PCNA sliding clamp onto DNA. The complex possesses DNA-dependent ATPase activity which is further stimulated by PCNA. In Archaeoglobus fulgidus (strain ATCC 49558 / DSM 4304 / JCM 9628 / NBRC 100126 / VC-16), this protein is Replication factor C large subunit (rfcL).